A 400-amino-acid chain; its full sequence is MQRRRRAPPASQPAQDSGHSEEVEVQFSAGRLGSAAPAGPPVRGTAEDEERLEREHFWKVINAFRYYGTSMHERVNRTERQFRSLPDNQQKLLPQFPLHLDKIRKCVDHNQEILLTIVNDCIHMFENKEYGEDANGKIMPASTFDMDKLKSTLKQFVRDWSGTGKAERDACYKPIIKEIIKNFPKERWDPSKVNILVPGAGLGRLAWEIAMLGYACQGNEWSFFMLFSSNFVLNRCSEVDKYKLYPWIHQFSNNRRSADQIRPIFFPDVDPHSLPPGSNFSMTAGDFQEIYSECNTWDCIATCFFIDTAHNVIDYIDTIWRILKPGGIWINLGPLLYHFENLANELSIELSYEDIKNVVLQYGFQLEVEKESVLSTYTVNDLSMMKYYYECVLFVVRKPQ.

The segment at methionine 1–glutamate 49 is disordered. Positions 155, 158, 199, 220, 286, 287, and 303 each coordinate S-adenosyl-L-methionine. Aspartate 307 is a binding site for carnosine. Tyrosine 315 provides a ligand contact to S-adenosyl-L-methionine. Carnosine is bound by residues histidine 338 and tyrosine 389.

It belongs to the carnosine N-methyltransferase family. In terms of assembly, homodimer. Each monomer accommodates one molecule of carnosine in its active pocket, precisely anchoring the histidine imidazole ring such that only N1 is exposed and deprotonated for methylation. As to expression, expressed at higher level in skeletal muscle compared to other tissues.

Its subcellular location is the cytoplasm. It is found in the cytosol. It localises to the nucleus. The catalysed reaction is carnosine + S-adenosyl-L-methionine = anserine + S-adenosyl-L-homocysteine + H(+). Its function is as follows. N-methyltransferase that catalyzes the formation of anserine (beta-alanyl-N(Pi)-methyl-L-histidine) from carnosine. Anserine, a methylated derivative of carnosine (beta-alanyl-L-histidine), is an abundant constituent of vertebrate skeletal muscles. Also methylates other L-histidine-containing di- and tripeptides such as Gly-Gly-His, Gly-His and homocarnosine (GABA-His). This Rattus norvegicus (Rat) protein is Carnosine N-methyltransferase.